Consider the following 374-residue polypeptide: 4-hydroxybenzoate polyprenyltransferase, mitochondrial (374 aa).

The transit peptide at 1 to 34 directs the protein to the mitochondrion; that stretch reads MLRWGGAGLARGLRAVRSAWLRGPRGLPLALVRS. The Mitochondrial matrix portion of the chain corresponds to 35–83; that stretch reads AGVPGARDRRAPAPGTQRGRALSLSAAAVVNSAPRPLQPYLRLMRLDKP. Residues 84–104 traverse the membrane as a helical segment; it reads IGTWLLYLPCTWSIGLAADPG. Over 105-108 the chain is Mitochondrial intermembrane; the sequence is CFPD. Residues 109-129 form a helical membrane-spanning segment; the sequence is WYMLSLFGTGAILMRGAGCTI. The Mitochondrial matrix portion of the chain corresponds to 130 to 148; that stretch reads NDMWDRDFDKKVTRTANRP. A helical membrane pass occupies residues 149 to 169; sequence IAAGDISTFQSFVFLGGQLTL. The Mitochondrial intermembrane portion of the chain corresponds to 170 to 172; sequence ALG. A helical transmembrane segment spans residues 173–193; it reads VLLCLNYYSIAMGAASLLLVV. At 194 to 200 the chain is on the mitochondrial matrix side; sequence TYPLVKR. A helical membrane pass occupies residues 201–221; it reads ITFWPQLALGLTFNWGALLGW. At 222 to 230 the chain is on the mitochondrial intermembrane side; that stretch reads SAVKGSCDP. Residues 231–251 form a helical membrane-spanning segment; that stretch reads AVCLPLYFSGVMWTLIYDTIY. The Mitochondrial matrix portion of the chain corresponds to 252–277; it reads AHQDKKDDALIGLKSTALLFQENTRQ. A helical membrane pass occupies residues 278 to 298; it reads WLSGFGVAMVAALSLAGANNG. Topologically, residues 299 to 332 are mitochondrial intermembrane; sequence QTVPYYAAVAAVGAHLAHQIYTVDIHRAEDCWDK. The helical transmembrane segment at 333–353 threads the bilayer; it reads FTSNRTVGMLLFLGIVLGNLC. Residues 354–374 are Mitochondrial matrix-facing; it reads KEKTEEAKDAEAVRVGSEQTS.

It belongs to the UbiA prenyltransferase family. The cofactor is Mg(2+).

The protein resides in the mitochondrion inner membrane. The enzyme catalyses an all-trans-polyprenyl diphosphate + 4-hydroxybenzoate = a 4-hydroxy-3-(all-trans-polyprenyl)benzoate + diphosphate. The catalysed reaction is all-trans-decaprenyl diphosphate + 4-hydroxybenzoate = 4-hydroxy-3-(all-trans-decaprenyl)benzoate + diphosphate. It carries out the reaction all-trans-nonaprenyl diphosphate + 4-hydroxybenzoate = 4-hydroxy-3-(all-trans-nonaprenyl)benzoate + diphosphate. It functions in the pathway cofactor biosynthesis; ubiquinone biosynthesis. Its function is as follows. Mediates the second step in the final reaction sequence of coenzyme Q (CoQ) biosynthesis. Catalyzes the prenylation of para-hydroxybenzoate (PHB) with an all-trans polyprenyl donor (such as all-trans-nonaprenyl diphosphate). The length of the polyprenyl side chain varies depending on the species, in humans, the side chain is comprised of 10 isoprenyls producing CoQ10 (also known as ubiquinone), whereas rodents predominantly generate CoQ9. However, this specificity is not complete, human tissues have low amounts of CoQ9 and rodent organs contain some CoQ10. Plays a central role in the biosynthesis of CoQ9. CoQ9 is a vital molecule that transports electrons from mitochondrial respiratory chain complexes. CoQs also function as cofactors for uncoupling protein and play a role as regulators of the extracellularly-induced ceramide-dependent apoptotic pathway. Regulates mitochondrial permeability transition pore (mPTP) opening and ROS production (pivotal events in cell death) in a tissue specific manner. The chain is 4-hydroxybenzoate polyprenyltransferase, mitochondrial from Mus musculus (Mouse).